We begin with the raw amino-acid sequence, 396 residues long: Tryptophan synthase beta chain (396 aa).

Lys86 carries the N6-(pyridoxal phosphate)lysine modification.

The protein belongs to the TrpB family. Tetramer of two alpha and two beta chains. The cofactor is pyridoxal 5'-phosphate.

It catalyses the reaction (1S,2R)-1-C-(indol-3-yl)glycerol 3-phosphate + L-serine = D-glyceraldehyde 3-phosphate + L-tryptophan + H2O. The protein operates within amino-acid biosynthesis; L-tryptophan biosynthesis; L-tryptophan from chorismate: step 5/5. In terms of biological role, the beta subunit is responsible for the synthesis of L-tryptophan from indole and L-serine. This Erwinia tasmaniensis (strain DSM 17950 / CFBP 7177 / CIP 109463 / NCPPB 4357 / Et1/99) protein is Tryptophan synthase beta chain.